The chain runs to 258 residues: 6-phosphogluconolactonase (258 aa).

The protein belongs to the glucosamine/galactosamine-6-phosphate isomerase family. 6-phosphogluconolactonase subfamily.

It carries out the reaction 6-phospho-D-glucono-1,5-lactone + H2O = 6-phospho-D-gluconate + H(+). Its pathway is carbohydrate degradation; pentose phosphate pathway; D-ribulose 5-phosphate from D-glucose 6-phosphate (oxidative stage): step 2/3. Its function is as follows. Hydrolysis of 6-phosphogluconolactone to 6-phosphogluconate. The chain is 6-phosphogluconolactonase (pgl) from Chlamydia pneumoniae (Chlamydophila pneumoniae).